The sequence spans 243 residues: Terpene cyclase ptmB (243 aa).

Transmembrane regions (helical) follow at residues 19-39, 48-68, and 78-98; these read IANL…VGMI, YGMA…YSLI, and GVFI…IKFA. Asn-111 carries N-linked (GlcNAc...) asparagine glycosylation. 4 consecutive transmembrane segments (helical) span residues 112–132, 137–157, 172–194, and 205–225; these read LSLI…ALAA, SLAY…GGLC, LWLS…WMYW, and LVLW…ICYW.

It belongs to the paxB family.

It localises to the membrane. Its pathway is secondary metabolite biosynthesis. In terms of biological role, terpene cyclase; part of the gene cluster that mediates the biosynthesis of the indole diterpenes penitrems. The geranylgeranyl diphosphate (GGPP) synthase ptmG catalyzes the first step in penitrem biosynthesis via conversion of farnesyl pyrophosphate and isopentyl pyrophosphate into geranylgeranyl pyrophosphate (GGPP). Condensation of indole-3-glycerol phosphate with GGPP by the prenyl transferase ptmC then forms 3-geranylgeranylindole (3-GGI). Epoxidation by the FAD-dependent monooxygenase ptmM leads to a epoxidized-GGI that is substrate of the terpene cyclase ptmB for cyclization to yield paspaline. Paspaline is subsequently converted to 13-desoxypaxilline by the cytochrome P450 monooxygenase ptmP, the latter being then converted to paxilline by the cytochrome P450 monooxygenase ptmQ. Paxilline is converted to beta-paxitriol via C-10 ketoreduction by the short-chain dehydrogenase ptmH which can be monoprenylated at the C-20 by the indole diterpene prenyltransferase ptmD. A two-step elimination (acetylation and elimination) process performed by the O-acetyltransferase ptmV and ptmI leads to the production of the prenylated form of penijanthine. The FAD-linked oxidoreductase ptmO then converts the prenylated form of penijanthine into PC-M5 which is in turn transformed into PC-M4 by the aromatic dimethylallyltransferase ptmE. Five sequential oxidative transformations performed by the cytochrome P450 monooxygenases ptmK, ptmU, ptmL, ptmN and ptmJ yield the various penitrem compounds. PtmK, ptmU and ptmM are involved in the formation of the key bicyclic ring of penitrem C via the formation of the intermediates secopenitrem D and penitrem D. PtmL catalyzes the epoxidation of penitrem D and C to yield penitrem B and F, respectively. PtmJ catalyzes the last benzylic hydroxylation to convert penitrem B to prenitrem E and penitrem F to penitrem A. This Penicillium ochrochloron protein is Terpene cyclase ptmB.